Reading from the N-terminus, the 285-residue chain is MQMWFSQYHTVNVKLDVRIQEQLFSGQSDYQKIDVFKSYEFGKMVALDGEIVFSDTDEFIYDEMVTHVPMAVHPNAKRILIIGGGDGGVAKELIKYPSVEHIDVVETDKMFVDVCRRFFPEVACGLEDERISMFYDDGLRFLRRKHDEYDLIINDSTDPLGHTEGLFTKEFYGSCYKALKDDGIMVYQHGSPFYDEDELECRKMHRKVYKSFPISRVYQAHIPTCPSGYWLFGFASKKYHPLYDLDAKRWDELGLKTWYYTTHLHRGAFMLPKYVEDLLEEEETK.

In terms of domain architecture, PABS spans 2–237 (QMWFSQYHTV…GYWLFGFASK (236 aa)). Residue Q31 coordinates S-methyl-5'-thioadenosine. D86 serves as a coordination point for spermidine. S-methyl-5'-thioadenosine-binding positions include E106 and 137–138 (DG). D155 serves as the catalytic Proton acceptor. Residue 155-158 (DSTD) participates in spermidine binding.

This sequence belongs to the spermidine/spermine synthase family. As to quaternary structure, homodimer or homotetramer.

The protein resides in the cytoplasm. The catalysed reaction is S-adenosyl 3-(methylsulfanyl)propylamine + putrescine = S-methyl-5'-thioadenosine + spermidine + H(+). It functions in the pathway amine and polyamine biosynthesis; spermidine biosynthesis; spermidine from putrescine: step 1/1. Its function is as follows. Catalyzes the irreversible transfer of a propylamine group from the amino donor S-adenosylmethioninamine (decarboxy-AdoMet) to putrescine (1,4-diaminobutane) to yield spermidine. This chain is Polyamine aminopropyltransferase, found in Agathobacter rectalis (strain ATCC 33656 / DSM 3377 / JCM 17463 / KCTC 5835 / VPI 0990) (Eubacterium rectale).